Consider the following 518-residue polypeptide: OTU domain-containing protein 5 (518 aa).

2 disordered regions span residues 1-79 (MTIL…SGGA) and 105-144 (PGHS…ETAA). Pro residues predominate over residues 39-53 (SSPPPRWAYPGNPAP). The span at 116–125 (SAGPGAPGSS) shows a compositional bias: low complexity. Residues 171 to 294 (FIIKQMKEDG…NIHYNSVVNP (124 aa)) form the OTU domain. Residues 176-182 (MKEDGAC) are cys-loop. The active site involves Asp179. Residue Cys182 is the Nucleophile of the active site. Positions 231-241 (KRKNNCHGNHI) are variable-loop. The tract at residues 282-287 (YHRNIH) is his-loop. His287 is a catalytic residue. Residues 371 to 450 (ARQPRKASAT…GPSNQTCAGA (80 aa)) are disordered. The segment covering 377 to 390 (ASATCSSATAAASS) has biased composition (low complexity).

It belongs to the peptidase C85 family.

The catalysed reaction is Thiol-dependent hydrolysis of ester, thioester, amide, peptide and isopeptide bonds formed by the C-terminal Gly of ubiquitin (a 76-residue protein attached to proteins as an intracellular targeting signal).. Its function is as follows. Deubiquitinating enzyme that may function as negative regulator of the innate immune system. Has peptidase activity towards 'Lys-48'- and 'Lys-63'-linked polyubiquitin chains. Can also cleave 'Lys-11'-linked ubiquitin chains (in vitro). This is OTU domain-containing protein 5 (otud5) from Xenopus tropicalis (Western clawed frog).